An 87-amino-acid chain; its full sequence is Putative regulatory protein GTNG_1019 (87 aa).

It belongs to the RemA family.

In Geobacillus thermodenitrificans (strain NG80-2), this protein is Putative regulatory protein GTNG_1019.